Here is a 472-residue protein sequence, read N- to C-terminus: SURF6 homolog gldi-11 (472 aa).

Disordered regions lie at residues 53-73 (LSKKERKSMSAQQKQHLAKGL), 89-232 (KSKQ…SPEI), 249-350 (KVER…DRAL), and 414-472 (LVKK…GRIL). The span at 95–106 (KVQPQKVVAPVK) shows a compositional bias: low complexity. Over residues 107–132 (RPADQNKNKEKVVKKDQKKQDKKADS) the composition is skewed to basic and acidic residues. Positions 133–150 (DSEEDDSSDDEEKEETDE) are enriched in acidic residues. Residues 151–160 (PVAKKQKKEE) are compositionally biased toward basic and acidic residues. Composition is skewed to acidic residues over residues 161 to 175 (SSDDDEDSEDGEEPE) and 182 to 194 (EAEDSDSTDEEEE). The span at 197-210 (SKPNKTVAQSTLKS) shows a compositional bias: polar residues. Residues 212–221 (GKIDKEIQKL) are compositionally biased toward basic and acidic residues. Residues 274 to 285 (LKRRESKLKLKQ) show a composition bias toward basic residues. Residues 286-305 (RRAEEKKGKEAAAQVKKETV) are compositionally biased toward basic and acidic residues. Over residues 414 to 426 (LVKKNKMKDRRKQ) the composition is skewed to basic residues. The segment covering 427-443 (KWENRENKTEGEKQTKQ) has biased composition (basic and acidic residues). Positions 459 to 472 (KRKMNKLRNKGRIL) are enriched in basic residues.

This sequence belongs to the SURF6 family.

The protein localises to the nucleus. It is found in the nucleoplasm. In terms of biological role, binds to both DNA and RNA in vitro, with a stronger binding capacity for RNA. May represent a nucleolar constitutive protein involved in ribosomal biosynthesis or assembly. This chain is SURF6 homolog gldi-11, found in Caenorhabditis elegans.